Reading from the N-terminus, the 222-residue chain is Probable nicotinate-nucleotide adenylyltransferase (222 aa).

This sequence belongs to the NadD family.

The catalysed reaction is nicotinate beta-D-ribonucleotide + ATP + H(+) = deamido-NAD(+) + diphosphate. The protein operates within cofactor biosynthesis; NAD(+) biosynthesis; deamido-NAD(+) from nicotinate D-ribonucleotide: step 1/1. Its function is as follows. Catalyzes the reversible adenylation of nicotinate mononucleotide (NaMN) to nicotinic acid adenine dinucleotide (NaAD). The chain is Probable nicotinate-nucleotide adenylyltransferase from Stenotrophomonas maltophilia (strain K279a).